A 643-amino-acid chain; its full sequence is NAD-dependent malic enzyme, mitochondrial (643 aa).

The N-terminal 38 residues, 1–38 (PRVRSFIAHQSGITSVIRRSPDIAHRMVRSLSVSSQRN), are a transit peptide targeting the mitochondrion. 3 residues coordinate fumarate: Q116, R119, and R143. Y164 acts as the Proton donor in catalysis. R219 contributes to the (S)-malate binding site. Residue R219 participates in NAD(+) binding. K237 acts as the Proton acceptor in catalysis. E309 and D310 together coordinate a divalent metal cation. The NAD(+) site is built by N313, D333, A366, A369, and N472. D333 contacts a divalent metal cation. The (S)-malate site is built by N472 and N516.

The protein belongs to the malic enzymes family. As to quaternary structure, homotetramer. Mg(2+) serves as cofactor. The cofactor is Mn(2+).

The protein localises to the mitochondrion matrix. It catalyses the reaction (S)-malate + NAD(+) = pyruvate + CO2 + NADH. The enzyme catalyses oxaloacetate + H(+) = pyruvate + CO2. Its activity is regulated as follows. Subject to allosteric activation by fumarate. Its function is as follows. NAD-dependent mitochondrial malic enzyme that catalyzes the oxidative decarboxylation of malate to pyruvate. The protein is NAD-dependent malic enzyme, mitochondrial of Ascaris suum (Pig roundworm).